We begin with the raw amino-acid sequence, 83 residues long: Small ribosomal subunit protein bS16 (83 aa).

The protein belongs to the bacterial ribosomal protein bS16 family.

The polypeptide is Small ribosomal subunit protein bS16 (Azoarcus sp. (strain BH72)).